Consider the following 515-residue polypeptide: Bifunctional purine biosynthesis protein PurH (515 aa).

The region spanning M1 to V145 is the MGS-like domain.

It belongs to the PurH family.

It catalyses the reaction (6R)-10-formyltetrahydrofolate + 5-amino-1-(5-phospho-beta-D-ribosyl)imidazole-4-carboxamide = 5-formamido-1-(5-phospho-D-ribosyl)imidazole-4-carboxamide + (6S)-5,6,7,8-tetrahydrofolate. It carries out the reaction IMP + H2O = 5-formamido-1-(5-phospho-D-ribosyl)imidazole-4-carboxamide. It functions in the pathway purine metabolism; IMP biosynthesis via de novo pathway; 5-formamido-1-(5-phospho-D-ribosyl)imidazole-4-carboxamide from 5-amino-1-(5-phospho-D-ribosyl)imidazole-4-carboxamide (10-formyl THF route): step 1/1. The protein operates within purine metabolism; IMP biosynthesis via de novo pathway; IMP from 5-formamido-1-(5-phospho-D-ribosyl)imidazole-4-carboxamide: step 1/1. The sequence is that of Bifunctional purine biosynthesis protein PurH from Streptococcus pyogenes serotype M18 (strain MGAS8232).